We begin with the raw amino-acid sequence, 389 residues long: Putative 8-amino-7-oxononanoate synthase (389 aa).

Residue Arg22 coordinates substrate. Pyridoxal 5'-phosphate is bound at residue Gly109–Tyr110. His134 provides a ligand contact to substrate. Pyridoxal 5'-phosphate contacts are provided by residues Ser182, Asp207–His210, and Thr238–Lys241. Lys241 carries the N6-(pyridoxal phosphate)lysine modification. Thr350 provides a ligand contact to substrate.

Belongs to the class-II pyridoxal-phosphate-dependent aminotransferase family. BioF subfamily. In terms of assembly, homodimer. Pyridoxal 5'-phosphate serves as cofactor.

It catalyses the reaction 6-carboxyhexanoyl-[ACP] + L-alanine + H(+) = (8S)-8-amino-7-oxononanoate + holo-[ACP] + CO2. It participates in cofactor biosynthesis; biotin biosynthesis. In terms of biological role, catalyzes the decarboxylative condensation of pimeloyl-[acyl-carrier protein] and L-alanine to produce 8-amino-7-oxononanoate (AON), [acyl-carrier protein], and carbon dioxide. The polypeptide is Putative 8-amino-7-oxononanoate synthase (bioF) (Parvibaculum lavamentivorans (strain DS-1 / DSM 13023 / NCIMB 13966)).